A 766-amino-acid chain; its full sequence is FYVE, RhoGEF and PH domain-containing protein 4 (766 aa).

Positions 1–150 are actin filament-binding; it reads MEESNPAPTS…SSIANSHDEN (150 aa). Composition is skewed to polar residues over residues 47 to 62 and 70 to 85; these read LNIPQTLGQPGLTSSP and HSPQKQENDPDQTQGQ. Disordered stretches follow at residues 47-86 and 143-173; these read LNIPQTLGQPGLTSSPPRKFLPQHSPQKQENDPDQTQGQH and IANSHDENASDSSCRTPGTDLGLPSKEGEPG. The DH domain maps to 206-393; sequence KLHKIATELL…STAASHSNSA (188 aa). Residues 422 to 521 form the PH 1 domain; sequence ELIKEGQILK…WIKALQESID (100 aa). The FYVE-type zinc-finger motif lies at 559-619; the sequence is DNEVTMCMKC…VCKDCYQIIS (61 aa). The Zn(2+) site is built by Cys565, Cys568, Cys582, Cys585, Cys590, Cys593, Cys611, and Cys614. One can recognise a PH 2 domain in the interval 643 to 740; sequence NSEVCSFLQY…WLKIILLAVT (98 aa). Phosphoserine occurs at positions 702 and 716. The interval 746–766 is disordered; sequence GPSEHLATLNNLPGPKKKSEC.

As to quaternary structure, homooligomer. As to expression, detected in thymus, lung, heart, skeletal muscle, small intestine, liver, kidney, spleen and testis. Expressed in all parts of the brain and in the spinal cord at embryonic, postnatal, and adult stages. Levels of expression are lower in postnatal and adult tissues than in embryonic tissues.

It is found in the cytoplasm. It localises to the cytoskeleton. The protein resides in the cell projection. The protein localises to the filopodium. Functionally, activates CDC42, a member of the Ras-like family of Rho- and Rac proteins, by exchanging bound GDP for free GTP. Activates MAPK8. Plays a role in regulating the actin cytoskeleton and cell shape. Promotes the formation of lamellipodia. The sequence is that of FYVE, RhoGEF and PH domain-containing protein 4 (Fgd4) from Mus musculus (Mouse).